The following is a 341-amino-acid chain: MKILEYDEKTGALRLHVENEDDLWLIHLVLSKGDIVVARTTRDVSMGNDSRRVPMVVELEVEFSEFQPFTSRLRIHGIVRDAPERYGIKGSHHTINLDIGDEIVIIKKWTKGLIDRIRKQAEKNKRVLIVLTDQDELLVALPMEQGIRILTERSLPGVSDEDKSLESVALEVSKEVEQYVKQYSPDAVIIAGPGPFKEIVRDKLKIKPRIYVDNVSSASRAGLNEILRRDIIDEVMRDYQISVASRELERGLSLLAQGSSLVVYGRDEVERASQIGAVETLLVTDDLLTLEDEETRRKTEAIMEAVESKGGKVMIVPKDSPVYLQLKNLTGLLAILRFRIN.

This sequence belongs to the eukaryotic release factor 1 family. Pelota subfamily. In terms of assembly, monomer. The cofactor is a divalent metal cation.

It localises to the cytoplasm. Its function is as follows. May function in recognizing stalled ribosomes, interact with stem-loop structures in stalled mRNA molecules, and effect endonucleolytic cleavage of the mRNA. May play a role in the release non-functional ribosomes and degradation of damaged mRNAs. Has endoribonuclease activity. The chain is Protein pelota homolog from Metallosphaera sedula (strain ATCC 51363 / DSM 5348 / JCM 9185 / NBRC 15509 / TH2).